Consider the following 607-residue polypeptide: DNA mismatch repair protein MutL (607 aa).

The protein belongs to the DNA mismatch repair MutL/HexB family.

Its function is as follows. This protein is involved in the repair of mismatches in DNA. It is required for dam-dependent methyl-directed DNA mismatch repair. May act as a 'molecular matchmaker', a protein that promotes the formation of a stable complex between two or more DNA-binding proteins in an ATP-dependent manner without itself being part of a final effector complex. This is DNA mismatch repair protein MutL from Paramagnetospirillum magneticum (strain ATCC 700264 / AMB-1) (Magnetospirillum magneticum).